A 225-amino-acid polypeptide reads, in one-letter code: 3-demethoxyubiquinol 3-hydroxylase (225 aa).

Residues 1 to 11 (MSVASTSSGFT) are compositionally biased toward polar residues. The segment at 1-20 (MSVASTSSGFTPFSRRRGPL) is disordered. Glutamate 74, glutamate 104, histidine 107, glutamate 156, glutamate 188, and histidine 191 together coordinate Fe cation. Positions 181–203 (VSQMKDDEAQHRASAERAGGVPL) are disordered. The segment covering 184 to 195 (MKDDEAQHRASA) has biased composition (basic and acidic residues).

The protein belongs to the COQ7 family. It depends on Fe cation as a cofactor.

It localises to the cell membrane. It catalyses the reaction a 5-methoxy-2-methyl-3-(all-trans-polyprenyl)benzene-1,4-diol + AH2 + O2 = a 3-demethylubiquinol + A + H2O. Its pathway is cofactor biosynthesis; ubiquinone biosynthesis. In terms of biological role, catalyzes the hydroxylation of 2-nonaprenyl-3-methyl-6-methoxy-1,4-benzoquinol during ubiquinone biosynthesis. The chain is 3-demethoxyubiquinol 3-hydroxylase from Bordetella petrii (strain ATCC BAA-461 / DSM 12804 / CCUG 43448).